Reading from the N-terminus, the 211-residue chain is Dephospho-CoA kinase (211 aa).

In terms of domain architecture, DPCK spans 3-206 (VIGLTGGIAT…GGRGRRLPNA (204 aa)). Position 11–16 (11–16 (ATGKST)) interacts with ATP.

The protein belongs to the CoaE family.

The protein localises to the cytoplasm. It carries out the reaction 3'-dephospho-CoA + ATP = ADP + CoA + H(+). The protein operates within cofactor biosynthesis; coenzyme A biosynthesis; CoA from (R)-pantothenate: step 5/5. Its function is as follows. Catalyzes the phosphorylation of the 3'-hydroxyl group of dephosphocoenzyme A to form coenzyme A. This chain is Dephospho-CoA kinase, found in Anaeromyxobacter dehalogenans (strain 2CP-C).